The chain runs to 224 residues: Ribose-5-phosphate isomerase A (224 aa).

Residues 26 to 29 (TGST), 82 to 85 (DGAD), and 95 to 98 (KGGG) each bind substrate. Glu104 functions as the Proton acceptor in the catalytic mechanism. Lys122 contacts substrate.

This sequence belongs to the ribose 5-phosphate isomerase family. In terms of assembly, homodimer.

The enzyme catalyses aldehydo-D-ribose 5-phosphate = D-ribulose 5-phosphate. Its pathway is carbohydrate degradation; pentose phosphate pathway; D-ribose 5-phosphate from D-ribulose 5-phosphate (non-oxidative stage): step 1/1. Its function is as follows. Catalyzes the reversible conversion of ribose-5-phosphate to ribulose 5-phosphate. In Lactococcus lactis subsp. cremoris (strain MG1363), this protein is Ribose-5-phosphate isomerase A.